Consider the following 402-residue polypeptide: Sex hormone-binding globulin (402 aa).

Positions 1-29 (MESRGPLATSRLLLLLLLLLLRHTRQGWA) are cleaved as a signal peptide. Threonine 36 carries O-linked (GalNAc...) threonine glycosylation. Laminin G-like domains follow at residues 45 to 217 (VHLS…LRSC) and 224 to 390 (GIFL…THSC). Cystine bridges form between cysteine 193–cysteine 217 and cysteine 362–cysteine 390. Residues asparagine 380 and asparagine 396 are each glycosylated (N-linked (GlcNAc...) asparagine).

As to quaternary structure, homodimer. In terms of processing, variant Asn-356 contains one N-linked (GlcNAc...) at position 356. In terms of tissue distribution, isoform 1 and isoform 2 are present in liver and testis.

The protein localises to the secreted. Functionally, functions as an androgen transport protein, but may also be involved in receptor mediated processes. Each dimer binds one molecule of steroid. Specific for 5-alpha-dihydrotestosterone, testosterone, and 17-beta-estradiol. Regulates the plasma metabolic clearance rate of steroid hormones by controlling their plasma concentration. The chain is Sex hormone-binding globulin from Homo sapiens (Human).